The sequence spans 328 residues: H-2 class I histocompatibility antigen, K-Q alpha chain (328 aa).

The segment at 1-71 is alpha-1; the sequence is PRFISVGYVD…LLRYYNQSAG (71 aa). The Extracellular portion of the chain corresponds to 1–265; it reads PRFISVGYVD…EPPPSAVSNT (265 aa). Asn-67 is a glycosylation site (N-linked (GlcNAc...) asparagine). Residues 72–163 form an alpha-2 region; that stretch reads GSHTIQRMYG…KNGNATLLRT (92 aa). A disulfide bridge connects residues Cys-82 and Cys-145. The N-linked (GlcNAc...) asparagine glycan is linked to Asn-157. Residues 164-255 are alpha-3; it reads DSPKAHVTHH…GLPKPLTLRW (92 aa). The Ig-like C1-type domain maps to 166–252; that stretch reads PKAHVTHHSR…YHQGLPKPLT (87 aa). Cys-184 and Cys-240 are oxidised to a cystine. Residues 256–265 form a connecting peptide region; sequence EPPPSAVSNT. The chain crosses the membrane as a helical span at residues 266-289; sequence VIIAVLVVLGAAIVTGAVVAFVMM. Over 290 to 328 the chain is Cytoplasmic; that stretch reads RRRNTGGKGGDYALAPGSQTSDLSLPDCKVMVHDPHSLA. Residues Ser-310 and Ser-313 each carry the phosphoserine modification.

It belongs to the MHC class I family. In terms of assembly, heterodimer of an alpha chain and a beta chain (beta-2-microglobulin).

The protein localises to the membrane. Its function is as follows. Involved in the presentation of foreign antigens to the immune system. The sequence is that of H-2 class I histocompatibility antigen, K-Q alpha chain (H2-K1) from Mus musculus (Mouse).